A 262-amino-acid chain; its full sequence is Oxidoreductase GME11367 (262 aa).

It belongs to the avfA family.

It functions in the pathway secondary metabolite biosynthesis. Functionally, oxidoreductase; part of the gene cluster that mediates the biosynthesis of dibenzodioxocinones such as pestalotiollide B, a novel class of inhibitors against cholesterol ester transfer protein (CEPT). The biosynthesis initiates from condensation of acetate and malonate units catalyzed by the non-reducing PKS pks8/GME11356. Pks8/GME11356 lacks a thioesterase (TE) domain, which is important to the cyclizing of the third ring of atrochrysone carboxylic acid, and the esterase GME11355 might play the role of TE and catalyzes the cyclization reaction of the C ring. The lactamase-like protein GME11357 (or other beta-lactamases in Pestalotiopsis microspora) probably hydrolyzes the thioester bond between the ACP of pks8/GME11356 and the intermediate to release atrochrysone carboxylic acid, which is spontaneously dehydrates to form endocrocin anthrone. Endocrocin anthrone is further converted to emodin via the endocrocin intermediate. Emodin is then oxidized by several enzymes such as the Baeyer-Villiger oxidase GME11358, the oxidoreductase GME11367, the short chain dehydrogenase/reductase GME11373, as well as by other oxidoreductases from the cluster, to modify the A and C rings and open the B ring, and finally yield monodictyphenone. The prenyltransferase GME11375 may catalyze the addition reaction between the C5 side chains and the carbon bone of dibenzodioxocinones. The remaining biochemical reactions to the final product dibenzodioxocinones should be methylation catalyzed by methyltransferase GME11366 and reduction and lactonization reaction catalyzed by a series of oxidordeuctases. The polypeptide is Oxidoreductase GME11367 (Pestalotiopsis microspora).